The following is a 480-amino-acid chain: Endoplasmic reticulum lectin 1 (480 aa).

The first 27 residues, 1-27 (MRRSDRFPCAGASLLVVLCGVFPSSFG), serve as a signal peptide directing secretion. MRH domains are found at residues 108-245 (SSCS…LCNH) and 339-466 (SYCF…ICKI). Cysteines 110 and 123 form a disulfide. The interval 152 to 172 (VKKSPSEAGENQEDKERTEGH) is disordered. Positions 163–172 (QEDKERTEGH) are enriched in basic and acidic residues. 5 disulfide bridges follow: C198–C231, C214–C243, C341–C354, C418–C452, and C433–C464.

Its subcellular location is the endoplasmic reticulum lumen. In terms of biological role, probable lectin that binds selectively to improperly folded lumenal proteins. May function in endoplasmic reticulum quality control and endoplasmic reticulum-associated degradation (ERAD) of both non-glycosylated proteins and glycoproteins. The polypeptide is Endoplasmic reticulum lectin 1 (erlec1) (Xenopus laevis (African clawed frog)).